The primary structure comprises 66 residues: Phylloseptin-S4 (66 aa).

An N-terminal signal peptide occupies residues 1-22 (MAFLKKSLFLVLFLGLVSLSIC). Residues 23-46 (EEEKRETEEEEHDQEEDDKSEEKR) constitute a propeptide that is removed on maturation. The tract at residues 25–44 (EKRETEEEEHDQEEDDKSEE) is disordered. A compositionally biased stretch (acidic residues) spans 30 to 41 (EEEEHDQEEDDK). The residue at position 65 (leucine 65) is a Leucine amide.

As to expression, expressed by the skin glands.

It localises to the secreted. Its subcellular location is the target cell membrane. Antimicrobial peptide with high activity against Gram-positive bacteria, moderate activity against Gram-negative bacteria, and moderate activity against fungi. Acts by causing bacterial membrane disruption inducing leakage of the intracellular content followed by cell death. It adopts an alpha-helical amphipathic structure in membrane environments. Also shows highly potent antiparasitic activity against Leishmania species. Shows moderate hemolytic activity on human erythrocytes (LC(50)=33 uM). Is also active on human monocytes (IC(50)=23 uM). The polypeptide is Phylloseptin-S4 (Phyllomedusa sauvagei (Sauvage's leaf frog)).